The following is a 68-amino-acid chain: Neuronal regeneration-related protein (68 aa).

This Gallus gallus (Chicken) protein is Neuronal regeneration-related protein (NREP).